The following is a 339-amino-acid chain: Geranylgeranyl pyrophosphate synthase AN1592 (339 aa).

The isopentenyl diphosphate site is built by K41, R44, and H73. 2 residues coordinate Mg(2+): D80 and D84. R89 contributes to the dimethylallyl diphosphate binding site. R90 contacts isopentenyl diphosphate. The dimethylallyl diphosphate site is built by K192, T193, and Q228. D231 contributes to the Mg(2+) binding site. Dimethylallyl diphosphate contacts are provided by N235, K245, and K255.

This sequence belongs to the FPP/GGPP synthase family. The cofactor is Mg(2+).

It carries out the reaction isopentenyl diphosphate + dimethylallyl diphosphate = (2E)-geranyl diphosphate + diphosphate. It catalyses the reaction isopentenyl diphosphate + (2E)-geranyl diphosphate = (2E,6E)-farnesyl diphosphate + diphosphate. The enzyme catalyses isopentenyl diphosphate + (2E,6E)-farnesyl diphosphate = (2E,6E,10E)-geranylgeranyl diphosphate + diphosphate. It participates in secondary metabolite biosynthesis. Functionally, geranylgeranyl pyrophosphate synthase; part of the gene cluster that mediates the biosynthesis of erinacines, cyathane-xylosides that show unique biological activities, including leishmanicidal activity, stimulating activity for nerve growth-factor synthesis, and agonistic activity toward the kappa opioid receptor. The geranylgeranyl diphosphate (GGPP) synthase eriE catalyzes the first step in erinacines biosynthesis via conversion of farnesyl pyrophosphate and isopentyl pyrophosphate into geranylgeranyl pyrophosphate (GGPP). GGPP is then substrate of the diterpene cyclase eriG for the production of cyatha-3,12-diene. The cytochrome P450 monooxygenase eriI then hydroxylates cyatha-3,12-diene at C-14 of the seven-membered ring to produce erinacol, which is further hydroxylated at C-15 by the cytochrome P450 monooxygenase eriC to yield cyathadiol. The cytochrome P450 monooxygenase eriA then catalyzes C-11 hydroxylation in the presence of the short chain dehydrogenase/reductase (SDR) eriH, which leads to the production of cyathatriol. The acetyltransferase eriL converts cyathatriol into 11-O-acetyl-cyathatriol. The SDR eriH catalyzes further oxidation of 11-O-acetyl-cyathatriol into 1-O-acetylcyathin A3. Finally, the glycosyl transferase eriJ tranfers xylose from UDP-xylose onto C-14 of 11-O-acetyl-cyathatriol to form eracine Q. EriJ is also able to convert 11-O-acetyl-cyathatriol to eracine Q2 by using UDP-D-glucose as cosubstrate, but at a lower rate. In the absence of eriL and eriJ, the SDR eriH is able to convert cyathatriol to cyathin A3; this is likely a switching mechanism in the biosynthesis of cyathins (C-14 ketogroup)and erinacines (C-14 glycosylated group). The roles of the SDR eriB, the polyprenyl transferase eriF and the dehydrogenase eriK have still to be identified. The protein is Geranylgeranyl pyrophosphate synthase AN1592 of Hericium erinaceus (Lion's mane mushroom).